The chain runs to 265 residues: tRNA (guanine-N(1)-)-methyltransferase (265 aa).

S-adenosyl-L-methionine contacts are provided by residues Gly-119 and 139–144; that span reads VGDYIL.

Belongs to the RNA methyltransferase TrmD family. In terms of assembly, homodimer.

It localises to the cytoplasm. The enzyme catalyses guanosine(37) in tRNA + S-adenosyl-L-methionine = N(1)-methylguanosine(37) in tRNA + S-adenosyl-L-homocysteine + H(+). In terms of biological role, specifically methylates guanosine-37 in various tRNAs. In Pseudoalteromonas atlantica (strain T6c / ATCC BAA-1087), this protein is tRNA (guanine-N(1)-)-methyltransferase.